The primary structure comprises 321 residues: Aspartate carbamoyltransferase catalytic subunit (321 aa).

2 residues coordinate carbamoyl phosphate: Arg-65 and Thr-66. Lys-93 lines the L-aspartate pocket. Carbamoyl phosphate is bound by residues Arg-115, His-143, and Gln-146. Positions 176 and 230 each coordinate L-aspartate. The carbamoyl phosphate site is built by Gly-271 and Pro-272.

The protein belongs to the aspartate/ornithine carbamoyltransferase superfamily. ATCase family. As to quaternary structure, heterododecamer (2C3:3R2) of six catalytic PyrB chains organized as two trimers (C3), and six regulatory PyrI chains organized as three dimers (R2).

The catalysed reaction is carbamoyl phosphate + L-aspartate = N-carbamoyl-L-aspartate + phosphate + H(+). It functions in the pathway pyrimidine metabolism; UMP biosynthesis via de novo pathway; (S)-dihydroorotate from bicarbonate: step 2/3. In terms of biological role, catalyzes the condensation of carbamoyl phosphate and aspartate to form carbamoyl aspartate and inorganic phosphate, the committed step in the de novo pyrimidine nucleotide biosynthesis pathway. This chain is Aspartate carbamoyltransferase catalytic subunit, found in Bartonella quintana (strain Toulouse) (Rochalimaea quintana).